Here is a 361-residue protein sequence, read N- to C-terminus: Cyclic AMP receptor-like protein C (361 aa).

The Extracellular portion of the chain corresponds to 1-18; the sequence is MGIEESQICNPSDREFLS. The helical transmembrane segment at 19-39 threads the bilayer; the sequence is VDILNIVTSSLSLMGSALTII. Residues 40–113 are Cytoplasmic-facing; that stretch reads SYIWKKVRRH…HGTYKQPTSK (74 aa). Residues 114 to 134 form a helical membrane-spanning segment; sequence LPLLIFMLSIADFFTSFFIII. Over 135-166 the chain is Extracellular; it reads SQSYLINNSKSYSTPYSPDLKIHFSPCIILRA. The chain crosses the membrane as a helical span at residues 167 to 187; it reads IIQFFFLSTFFWTTCISYYLF. The Cytoplasmic portion of the chain corresponds to 188-197; sequence HQLSSPGEEK. Residues 198-218 form a helical membrane-spanning segment; that stretch reads YLLAIFNVVSWGIPFAISMVI. Over 219–238 the chain is Extracellular; sequence TMTNSIVVNSDGWCEVAKPM. The chain crosses the membrane as a helical span at residues 239-259; it reads ELSLWFLPLFLCLLVCSIYYF. Residues 260-292 lie on the Cytoplasmic side of the membrane; it reads RLRRLFRSKFEYRLQINDRLKQLDSTISRRLTL. The helical transmembrane segment at 293–313 threads the bilayer; it reads YIVVFVICWLPDVIQHFISFF. Over 314–318 the chain is Extracellular; that stretch reads SKCTF. Residues 319–339 traverse the membrane as a helical segment; the sequence is FPLLILQNILTPSQGFWNFWI. Topologically, residues 340–361 are cytoplasmic; it reads YSYTNKIARFTPSNDENKRLLQ.

It belongs to the G-protein coupled receptor 5 family.

Its subcellular location is the membrane. Functionally, receptor for cAMP. In Dictyostelium discoideum (Social amoeba), this protein is Cyclic AMP receptor-like protein C (crlC).